Here is a 347-residue protein sequence, read N- to C-terminus: Cyclic AMP-dependent transcription factor ATF-4 (347 aa).

Positions 202-296 (TPQCVKEEDT…AATRYRQKKR (95 aa)) are disordered. T211 bears the Phosphothreonine mark. Phosphoserine occurs at positions 213, 217, 222, 229, and 233. The short motif at 213–222 (SDSDSGICMS) is the BetaTrCP degron motif element. The segment covering 228 to 238 (GSPQHSPSTSR) has biased composition (polar residues). P234 carries the post-translational modification 4-hydroxyproline. Phosphoserine is present on residues S243 and S246. Glycyl lysine isopeptide (Lys-Gly) (interchain with G-Cter in SUMO2) cross-links involve residues K256 and K268. A compositionally biased stretch (basic and acidic residues) spans 269 to 283 (VKTEKLDKKLKKMEQ). In terms of domain architecture, bZIP spans 274–337 (LDKKLKKMEQ…QYLKDLIEEV (64 aa)). The tract at residues 276-296 (KKLKKMEQNKTAATRYRQKKR) is basic motif. The interaction with GABBR1 stretch occupies residues 301-337 (ALTGECKELEKKNEALKEKADSLAKEIQYLKDLIEEV). Residues 302–330 (LTGECKELEKKNEALKEKADSLAKEIQYL) form a leucine-zipper region. K307 is modified (N6-acetyllysine).

The protein belongs to the bZIP family. Binds DNA as a homodimer and as a heterodimer. Heterodimer; heterodimerizes with CEBPB. Heterodimer; heterodimerizes with DDIT3/CHOP. Interacts with CEP290 (via an N-terminal region). Interacts with NEK6, DAPK2 (isoform 2) and ZIPK/DAPK3. Interacts (via its leucine zipper domain) with GABBR1 and GABBR2 (via their C-termini). Forms a heterodimer with TXLNG in osteoblasts. Interacts (via its DNA binding domain) with FOXO1 (C-terminal half); the interaction occurs in osteoblasts and regulates glucose homeostasis through suppression of beta-cell proliferation and a decrease in insulin production. Interacts with SATB2; the interaction results in enhanced DNA binding and transactivation by these transcription factors. Interacts with ABRAXAS2. Interacts with TRIB3, inhibiting the transactivation activity of ATF4. Interacts with DISC1; which inhibits ATF4 transcription factor activity by disrupting ATF4 dimerization and DNA-binding. Interacts with EP300/p300; EP300/p300 stabilizes ATF4 and increases its transcriptional activity independently of its catalytic activity by preventing its ubiquitination. Post-translationally, ubiquitinated by SCF(BTRC) in response to mTORC1 signal, followed by proteasomal degradation and leading to down-regulate expression of SIRT4. Interaction with EP300/p300 inhibits ubiquitination by SCF(BTRC). In terms of processing, phosphorylation at Ser-243 by RPS6KA3/RSK2 in osteoblasts enhances transactivation activity and promotes osteoblast differentiation. Phosphorylated on the betaTrCP degron motif at Ser-217, followed by phosphorylation at Thr-211, Ser-222, Ser-229, Ser-233 and Ser-246, promoting interaction with BTRC and ubiquitination. Phosphorylation is promoted by mTORC1. Phosphorylation at Ser-213 by CK2 decreases its stability. Phosphorylated by NEK6. Hydroxylated by PHD3, leading to decreased protein stability. In terms of tissue distribution, expressed in brain, heart, liver, spleen, lung and muscle, but not testis.

The protein resides in the nucleus. It is found in the nucleus speckle. The protein localises to the cytoplasm. Its subcellular location is the cell membrane. It localises to the cytoskeleton. The protein resides in the microtubule organizing center. It is found in the centrosome. In terms of biological role, transcription factor that binds the cAMP response element (CRE) (consensus: 5'-GTGACGT[AC][AG]-3') and displays two biological functions, as regulator of metabolic and redox processes under normal cellular conditions, and as master transcription factor during integrated stress response (ISR). Binds to asymmetric CRE's as a heterodimer and to palindromic CRE's as a homodimer. Core effector of the ISR, which is required for adaptation to various stress such as endoplasmic reticulum (ER) stress, amino acid starvation, mitochondrial stress or oxidative stress. During ISR, ATF4 translation is induced via an alternative ribosome translation re-initiation mechanism in response to EIF2S1/eIF-2-alpha phosphorylation, and stress-induced ATF4 acts as a master transcription factor of stress-responsive genes in order to promote cell recovery. Promotes the transcription of genes linked to amino acid sufficiency and resistance to oxidative stress to protect cells against metabolic consequences of ER oxidation. Activates the transcription of NLRP1, possibly in concert with other factors in response to ER stress. Activates the transcription of asparagine synthetase (ASNS) in response to amino acid deprivation or ER stress. However, when associated with DDIT3/CHOP, the transcriptional activation of the ASNS gene is inhibited in response to amino acid deprivation. Together with DDIT3/CHOP, mediates programmed cell death by promoting the expression of genes involved in cellular amino acid metabolic processes, mRNA translation and the terminal unfolded protein response (terminal UPR), a cellular response that elicits programmed cell death when ER stress is prolonged and unresolved. Activates the expression of COX7A2L/SCAF1 downstream of the EIF2AK3/PERK-mediated unfolded protein response, thereby promoting formation of respiratory chain supercomplexes and increasing mitochondrial oxidative phosphorylation. Together with DDIT3/CHOP, activates the transcription of the IRS-regulator TRIB3 and promotes ER stress-induced neuronal cell death by regulating the expression of BBC3/PUMA in response to ER stress. May cooperate with the UPR transcriptional regulator QRICH1 to regulate ER protein homeostasis which is critical for cell viability in response to ER stress. In the absence of stress, ATF4 translation is at low levels and it is required for normal metabolic processes such as embryonic lens formation, fetal liver hematopoiesis, bone development and synaptic plasticity. Acts as a regulator of osteoblast differentiation in response to phosphorylation by RPS6KA3/RSK2: phosphorylation in osteoblasts enhances transactivation activity and promotes expression of osteoblast-specific genes and post-transcriptionally regulates the synthesis of Type I collagen, the main constituent of the bone matrix. Cooperates with FOXO1 in osteoblasts to regulate glucose homeostasis through suppression of beta-cell production and decrease in insulin production. Activates transcription of SIRT4. Regulates the circadian expression of the core clock component PER2 and the serotonin transporter SLC6A4. Binds in a circadian time-dependent manner to the cAMP response elements (CRE) in the SLC6A4 and PER2 promoters and periodically activates the transcription of these genes. Mainly acts as a transcriptional activator in cellular stress adaptation, but it can also act as a transcriptional repressor: acts as a regulator of synaptic plasticity by repressing transcription, thereby inhibiting induction and maintenance of long-term memory. Regulates synaptic functions via interaction with DISC1 in neurons, which inhibits ATF4 transcription factor activity by disrupting ATF4 dimerization and DNA-binding. The chain is Cyclic AMP-dependent transcription factor ATF-4 from Rattus norvegicus (Rat).